A 288-amino-acid chain; its full sequence is 33 kDa chaperonin (288 aa).

2 disulfides stabilise this stretch: Cys-235–Cys-237 and Cys-268–Cys-271.

Belongs to the HSP33 family. Under oxidizing conditions two disulfide bonds are formed involving the reactive cysteines. Under reducing conditions zinc is bound to the reactive cysteines and the protein is inactive.

The protein localises to the cytoplasm. Functionally, redox regulated molecular chaperone. Protects both thermally unfolding and oxidatively damaged proteins from irreversible aggregation. Plays an important role in the bacterial defense system toward oxidative stress. The protein is 33 kDa chaperonin of Streptococcus thermophilus (strain ATCC BAA-250 / LMG 18311).